Consider the following 220-residue polypeptide: Iron-sulfur cluster repair protein YtfE (220 aa).

Belongs to the RIC family. YtfE subfamily. Homodimer.

It localises to the cytoplasm. In terms of biological role, di-iron-containing protein involved in the repair of iron-sulfur clusters damaged by oxidative and nitrosative stress conditions. The protein is Iron-sulfur cluster repair protein YtfE of Escherichia coli (strain SMS-3-5 / SECEC).